The sequence spans 345 residues: MVSSNFYKNLGPRKLTAIIDFLHDIIAPPKIEDIAIHDIKILQEASPNDISFLSNPKYSEFLKTTKAAACIVPKNFTGEANPNTVLLHAQNSYFAYGKLIDFFYAPIKSYPTKIMKSAIVADSATIGKNCYIGHNVVIEDDVIIGDNSIIEAGSFIGRGVNIGRNARIEQHVSINYAIIGDDVVILAGAKIGQDGFGFSTEKGVHHKIFHIGIVKIGNNVEIGANTTIDRGSLQDTIIKDLCRIDNLVQIGHGVKIGKGSIIVAQTGIAGSSTIGKYCALGGQVGIAGHLNIGDGAQVAAQGGVAQNIEAGKIVGGSPAIPIMDWHRQSIIMKQLLKTSNSKLKK.

The active-site Proton acceptor is His252.

It belongs to the transferase hexapeptide repeat family. LpxD subfamily. As to quaternary structure, homotrimer.

It catalyses the reaction a UDP-3-O-[(3R)-3-hydroxyacyl]-alpha-D-glucosamine + a (3R)-hydroxyacyl-[ACP] = a UDP-2-N,3-O-bis[(3R)-3-hydroxyacyl]-alpha-D-glucosamine + holo-[ACP] + H(+). Its pathway is bacterial outer membrane biogenesis; LPS lipid A biosynthesis. In terms of biological role, catalyzes the N-acylation of UDP-3-O-acylglucosamine using 3-hydroxyacyl-ACP as the acyl donor. Is involved in the biosynthesis of lipid A, a phosphorylated glycolipid that anchors the lipopolysaccharide to the outer membrane of the cell. In Rickettsia rickettsii, this protein is UDP-3-O-acylglucosamine N-acyltransferase.